Reading from the N-terminus, the 459-residue chain is Chromosomal replication initiator protein DnaA (459 aa).

The domain I, interacts with DnaA modulators stretch occupies residues 1-73 (MEIPIESLWS…AHAVQDILGH (73 aa)). Residues 73-117 (HPVGIYITVAQGDEVSHFSEREVSWESTNPSSIPESLPHHNHKTT) form a domain II region. The domain III, AAA+ region stretch occupies residues 118–334 (ELNSKYVFSR…GALIRAVAYI (217 aa)). Residues glycine 162, glycine 164, lysine 165, and threonine 166 each coordinate ATP. Residues 335–459 (SIWGLPMTVE…INMTSRSQKS (125 aa)) are domain IV, binds dsDNA.

Belongs to the DnaA family. Oligomerizes as a right-handed, spiral filament on DNA at oriC.

It localises to the cytoplasm. Its function is as follows. Plays an essential role in the initiation and regulation of chromosomal replication. ATP-DnaA binds to the origin of replication (oriC) to initiate formation of the DNA replication initiation complex once per cell cycle. Binds the DnaA box (a 9 base pair repeat at the origin) and separates the double-stranded (ds)DNA. Forms a right-handed helical filament on oriC DNA; dsDNA binds to the exterior of the filament while single-stranded (ss)DNA is stabiized in the filament's interior. The ATP-DnaA-oriC complex binds and stabilizes one strand of the AT-rich DNA unwinding element (DUE), permitting loading of DNA polymerase. After initiation quickly degrades to an ADP-DnaA complex that is not apt for DNA replication. Binds acidic phospholipids. The polypeptide is Chromosomal replication initiator protein DnaA (Nostoc punctiforme (strain ATCC 29133 / PCC 73102)).